A 1868-amino-acid chain; its full sequence is Inactive histone-lysine N-methyltransferase 2E (1868 aa).

Residues 63–66 carry the HCFC1-binding motif (HBM) motif; the sequence is DHNY. The segment at 118–166 adopts a PHD-type zinc-finger fold; sequence VTRCICGFTHDDGYMICCDKCSVWQHIDCMGIDRQHIPDTYLCERCQPR. Residues Cys-121, Cys-123, Cys-135, Cys-138, His-143, Cys-146, Cys-160, and Cys-163 each contribute to the Zn(2+) site. 3 disordered regions span residues 178–197, 217–268, and 308–329; these read RRKR…SGDE, ASRV…SSDS, and GSGN…SLFR. In terms of domain architecture, SET spans 330–447; the sequence is PPVESHIQKN…KGTEITIAFD (118 aa). Ser-435 is a glycosylation site (O-linked (GlcNAc) serine). Thr-440 carries an O-linked (GlcNAc) threonine glycan. Residues 472–504 are disordered; sequence KRSSESTENINSGYETRRKKGKKEKDTSKEKDI. Basic and acidic residues predominate over residues 494 to 504; it reads KEKDTSKEKDI. Positions 559–613 form a coiled coil; that stretch reads VEMESEEQIAERKRKMTREERKMEAILQAFARLEKREKRREQALERISTAKTEVK. Positions 646–670 are enriched in basic residues; that stretch reads NRTKQRKSFSRSRTHIGQQRRRHRT. The disordered stretch occupies residues 646 to 682; the sequence is NRTKQRKSFSRSRTHIGQQRRRHRTVSMCSDIPPSSP. Phosphoserine occurs at positions 837 and 845. Residues 884–908 show a composition bias toward low complexity; that stretch reads YSESSTPTPSPYATPTHTDITPTDP. Disordered regions lie at residues 884–924 and 1038–1068; these read YSES…ETYR and SMET…SSWV. Polar residues predominate over residues 1049-1068; the sequence is PSNQLDSTHSGRGTMYSSWV. Ser-1070 bears the Phosphoserine mark. Disordered regions lie at residues 1165–1222, 1236–1315, 1334–1565, and 1585–1842; these read KRQR…PPPA, SSEE…SNHI, PDAE…QNQQ, and VFTS…QASP. The span at 1184–1197 shows a compositional bias: low complexity; sequence SVSPHPSGSLSSSG. Residues 1203-1213 show a composition bias toward polar residues; it reads SSENGEQAENQ. Residue Ser-1282 is modified to Phosphoserine. Positions 1282–1291 are enriched in basic and acidic residues; the sequence is SDHRKDKDSG. Low complexity-rich tracts occupy residues 1294 to 1312 and 1348 to 1363; these read SPCV…SSHS and PSPD…SKPG. Ser-1364 is subject to Phosphoserine. 3 stretches are compositionally biased toward polar residues: residues 1389–1421, 1451–1463, and 1488–1498; these read ATVS…QNHA, HTEN…TPHT, and SQSPQVGTPQR. A compositionally biased stretch (low complexity) spans 1506 to 1518; it reads AAAQNLQANPQQA. Residues 1519–1547 show a composition bias toward polar residues; the sequence is TSGALFTQTPSGQSSATYSQFNQQSLNST. The span at 1548–1558 shows a compositional bias: pro residues; it reads APPPPPPPPPS. Positions 1585-1603 are enriched in polar residues; the sequence is VFTSGPNQALPGSTSQQSV. Over residues 1631–1642 the composition is skewed to pro residues; sequence VPPPPPPPPAPG. Residues 1647–1656 are compositionally biased toward polar residues; the sequence is QQPSSHQQHS. Pro residues predominate over residues 1682 to 1692; the sequence is LPPPPPPPGPA. Residues 1706–1716 show a composition bias toward polar residues; sequence QSLQAQHQHVV. The span at 1719-1732 shows a compositional bias: pro residues; that stretch reads APPPPPPPPPPPPA. The span at 1806-1816 shows a compositional bias: polar residues; it reads QGPNSIPTPTA.

Belongs to the class V-like SAM-binding methyltransferase superfamily. Histone-lysine methyltransferase family. TRX/MLL subfamily. As to quaternary structure, component of a complex composed of KMT2E, OGT and USP7; the complex stabilizes KMT2E, preventing KMT2E ubiquitination and proteasomal-mediated degradation. Interacts (via N-terminus) with OGT (via TRP repeats). Interacts with deubiquitinating enzyme USP7 (via MATH domain). Interacts (via HBM motif) with HCFC1 (via Kelch domain). Interacts with E2F1; the interaction is probably indirect and is mediated via HCFC1. Ubiquitinated. Deubiquitinated by USP7. In terms of processing, O-glycosylated at Ser-435 and Thr-440 in the SET domain by OGT which probably prevents KMT2E proteasomal-mediated degradation.

The protein resides in the chromosome. Its subcellular location is the cytoplasm. It is found in the cytoskeleton. It localises to the microtubule organizing center. The protein localises to the centrosome. The protein resides in the nucleus speckle. In terms of biological role, associates with chromatin regions downstream of transcriptional start sites of active genes and thus regulates gene transcription. Chromatin interaction is mediated via the binding to tri-methylated histone H3 at 'Lys-4' (H3K4me3). Key regulator of hematopoiesis involved in terminal myeloid differentiation and in the regulation of hematopoietic stem cell (HSCs) self-renewal by a mechanism that involves DNA methylation. Also acts as an important cell cycle regulator, participating in cell cycle regulatory network machinery at multiple cell cycle stages including G1/S transition, S phase progression and mitotic entry. Recruited to E2F1 responsive promoters by HCFC1 where it stimulates tri-methylation of histone H3 at 'Lys-4' and transcriptional activation and thereby facilitates G1 to S phase transition. During myoblast differentiation, required to suppress inappropriate expression of S-phase-promoting genes and maintain expression of determination genes in quiescent cells. In Mus musculus (Mouse), this protein is Inactive histone-lysine N-methyltransferase 2E (Kmt2e).